A 357-amino-acid chain; its full sequence is MKAIAVKRGEDRPVVIEKPRPEPESGEALVRTLRVGVDGTDHEVIAGGHGGFPEGEDHLVLGHEAVGVVVDPNDTELEEGDIVVPTVRRPPASGTNEYFERDQPDMAPDGMYFERGIVGAHGYMSEFFTSPEKYLVRIPRSQAELGFLIEPISITEKALEHAYASRSAFDWDPSSAFVLGNGSLGLLTLAMLKVDDKGYENLYCLGRRDRPDPTIDIIEELDATYVDSRQTPVEDVPDVYEQMDFIYEATGFPKHAIQSVQALAPNGVGALLGVPSDWAFEVDAGAFHREMVLHNKALVGSVNSHVEHFEAATVTFTKLPKWFLEDLVTGVHPLSEFEAAFDDDDTTIKTAIEFSTV.

Aspartate 38 lines the Zn(2+) pocket. Positions 40 and 49 each coordinate substrate. Residues histidine 63 and glutamate 64 each contribute to the Zn(2+) site. Glutamate 114 and glutamate 150 together coordinate substrate. Zn(2+) is bound at residue glutamate 150. NADP(+)-binding positions include 181–184 (NGSL), 207–208 (RR), serine 228, 272–274 (LGV), and 301–303 (SVN). Asparagine 303 lines the substrate pocket.

Belongs to the zinc-containing alcohol dehydrogenase family. Glucose 1-dehydrogenase subfamily. In terms of assembly, homodimer. Requires Zn(2+) as cofactor.

The enzyme catalyses D-glucose + NAD(+) = D-glucono-1,5-lactone + NADH + H(+). It carries out the reaction D-glucose + NADP(+) = D-glucono-1,5-lactone + NADPH + H(+). Activated by molar concentrations of KCl or NaCl. Inhibited by EDTA in vitro. Its function is as follows. Catalyzes the NAD(P)(+)-dependent oxidation of D-glucose to D-gluconate. Displays broad substrate specificity since it is able to catalyze the oxidation of a number of alternative aldose sugars, such as D-xylose, D-galactose, and D-fucose, to the corresponding glyconate. Can utilize both NAD(+) and NADP(+) as electron acceptor, with a preference for NADP(+). Physiologically, seems to be involved in the degradation of glucose through a modified Entner-Doudoroff pathway. This Haloferax mediterranei (strain ATCC 33500 / DSM 1411 / JCM 8866 / NBRC 14739 / NCIMB 2177 / R-4) (Halobacterium mediterranei) protein is Glucose 1-dehydrogenase.